A 384-amino-acid polypeptide reads, in one-letter code: 8-amino-7-oxononanoate synthase (384 aa).

R21 is a substrate binding site. Residue 108-109 participates in pyridoxal 5'-phosphate binding; sequence GY. Substrate is bound at residue H133. Residues S179, H207, and T233 each contribute to the pyridoxal 5'-phosphate site. K236 bears the N6-(pyridoxal phosphate)lysine mark. T350 contacts substrate.

This sequence belongs to the class-II pyridoxal-phosphate-dependent aminotransferase family. BioF subfamily. In terms of assembly, homodimer. Pyridoxal 5'-phosphate is required as a cofactor.

The enzyme catalyses 6-carboxyhexanoyl-[ACP] + L-alanine + H(+) = (8S)-8-amino-7-oxononanoate + holo-[ACP] + CO2. The protein operates within cofactor biosynthesis; biotin biosynthesis. Catalyzes the decarboxylative condensation of pimeloyl-[acyl-carrier protein] and L-alanine to produce 8-amino-7-oxononanoate (AON), [acyl-carrier protein], and carbon dioxide. The polypeptide is 8-amino-7-oxononanoate synthase (Buchnera aphidicola subsp. Baizongia pistaciae (strain Bp)).